A 367-amino-acid polypeptide reads, in one-letter code: Chorismate synthase (367 aa).

An NADP(+)-binding site is contributed by arginine 48. FMN contacts are provided by residues 125–127 (RSS), 241–242 (NA), glycine 285, 300–304 (KPTSS), and arginine 326.

This sequence belongs to the chorismate synthase family. As to quaternary structure, homotetramer. The cofactor is FMNH2.

It catalyses the reaction 5-O-(1-carboxyvinyl)-3-phosphoshikimate = chorismate + phosphate. The protein operates within metabolic intermediate biosynthesis; chorismate biosynthesis; chorismate from D-erythrose 4-phosphate and phosphoenolpyruvate: step 7/7. In terms of biological role, catalyzes the anti-1,4-elimination of the C-3 phosphate and the C-6 proR hydrogen from 5-enolpyruvylshikimate-3-phosphate (EPSP) to yield chorismate, which is the branch point compound that serves as the starting substrate for the three terminal pathways of aromatic amino acid biosynthesis. This reaction introduces a second double bond into the aromatic ring system. In Dinoroseobacter shibae (strain DSM 16493 / NCIMB 14021 / DFL 12), this protein is Chorismate synthase.